A 201-amino-acid polypeptide reads, in one-letter code: Small ribosomal subunit protein uS4 (201 aa).

Positions 91–157 (CRLDNVVYRA…TPFIIAKETI (67 aa)) constitute an S4 RNA-binding domain.

It belongs to the universal ribosomal protein uS4 family. Part of the 30S ribosomal subunit. Contacts protein S5. The interaction surface between S4 and S5 is involved in control of translational fidelity.

In terms of biological role, one of the primary rRNA binding proteins, it binds directly to 16S rRNA where it nucleates assembly of the body of the 30S subunit. Functionally, with S5 and S12 plays an important role in translational accuracy. This is Small ribosomal subunit protein uS4 from Saccharopolyspora erythraea (strain ATCC 11635 / DSM 40517 / JCM 4748 / NBRC 13426 / NCIMB 8594 / NRRL 2338).